The sequence spans 185 residues: Ribosome-recycling factor (185 aa).

Belongs to the RRF family.

The protein localises to the cytoplasm. Its function is as follows. Responsible for the release of ribosomes from messenger RNA at the termination of protein biosynthesis. May increase the efficiency of translation by recycling ribosomes from one round of translation to another. The protein is Ribosome-recycling factor of Buchnera aphidicola subsp. Schizaphis graminum (strain Sg).